The primary structure comprises 438 residues: sn-glycerol-3-phosphate-binding periplasmic protein UgpB (438 aa).

Residues 1-23 (MISLRHTALGLALSLAFTGQALA) form the signal peptide. Sn-glycerol 3-phosphate is bound by residues Tyr65, Glu89, Ser144, Ser270, Gly307, Tyr346, and Arg397.

Belongs to the bacterial solute-binding protein 1 family. In terms of assembly, the complex is composed of two ATP-binding proteins (UgpC), two transmembrane proteins (UgpA and UgpE) and a solute-binding protein (UgpB).

It is found in the periplasm. Its function is as follows. Part of the ABC transporter complex UgpBAEC involved in sn-glycerol-3-phosphate (G3P) import. Binds G3P. This Salmonella typhi protein is sn-glycerol-3-phosphate-binding periplasmic protein UgpB (ugpB).